We begin with the raw amino-acid sequence, 306 residues long: Dermonecrotic toxin LiSicTox-alphaIA2ai (306 aa).

The signal sequence occupies residues 1–18 (MLPYIALILVCWSVLSQA). Positions 19–26 (AQTDVEGR) are excised as a propeptide. The active site involves H38. 2 residues coordinate Mg(2+): E58 and D60. H74 (nucleophile) is an active-site residue. Cystine bridges form between C78–C84 and C80–C223. D118 contributes to the Mg(2+) binding site. The N-linked (GlcNAc...) asparagine glycan is linked to N283.

Belongs to the arthropod phospholipase D family. Class II subfamily. Class IIa sub-subfamily. It depends on Mg(2+) as a cofactor. In terms of tissue distribution, expressed by the venom gland.

Its subcellular location is the secreted. The catalysed reaction is an N-(acyl)-sphingosylphosphocholine = an N-(acyl)-sphingosyl-1,3-cyclic phosphate + choline. It carries out the reaction an N-(acyl)-sphingosylphosphoethanolamine = an N-(acyl)-sphingosyl-1,3-cyclic phosphate + ethanolamine. It catalyses the reaction a 1-acyl-sn-glycero-3-phosphocholine = a 1-acyl-sn-glycero-2,3-cyclic phosphate + choline. The enzyme catalyses a 1-acyl-sn-glycero-3-phosphoethanolamine = a 1-acyl-sn-glycero-2,3-cyclic phosphate + ethanolamine. Functionally, dermonecrotic toxins cleave the phosphodiester linkage between the phosphate and headgroup of certain phospholipids (sphingolipid and lysolipid substrates), forming an alcohol (often choline) and a cyclic phosphate. This toxin acts on sphingomyelin (SM). It may also act on ceramide phosphoethanolamine (CPE), lysophosphatidylcholine (LPC) and lysophosphatidylethanolamine (LPE), but not on lysophosphatidylserine (LPS), and lysophosphatidylglycerol (LPG). It acts by transphosphatidylation, releasing exclusively cyclic phosphate products as second products. It induces complement-dependent hemolysis, dermonecrosis, vascular permeability and platelet aggregation. The sequence is that of Dermonecrotic toxin LiSicTox-alphaIA2ai from Loxosceles intermedia (Brown spider).